We begin with the raw amino-acid sequence, 287 residues long: Protease HtpX (287 aa).

The next 2 helical transmembrane spans lie at 4–24 (IFLL…VMSI) and 33–53 (SGLL…SLAI). Histidine 139 contacts Zn(2+). Residue glutamate 140 is part of the active site. Histidine 143 lines the Zn(2+) pocket. 2 helical membrane-spanning segments follow: residues 154-174 (LIQG…AGII) and 195-215 (AVVF…VAYF). Glutamate 220 provides a ligand contact to Zn(2+).

This sequence belongs to the peptidase M48B family. The cofactor is Zn(2+).

It localises to the cell inner membrane. This is Protease HtpX from Shewanella piezotolerans (strain WP3 / JCM 13877).